A 384-amino-acid chain; its full sequence is Urea transporter 1 (384 aa).

Positions 1–23 (MDDNPTAVKLDQGGNQAPQGQGR) are disordered. Helical transmembrane passes span 61-81 (ISQV…VGLL), 85-105 (PWCA…ALLL), 111-131 (AITA…MAIY), 138-158 (FWWL…FSSA), and 169-189 (PVFT…TGHF). N-linked (GlcNAc...) asparagine glycosylation is present at N206. 3 helical membrane passes run 237 to 257 (GGIF…HAAI), 279 to 299 (GLWG…FMAL), and 327 to 347 (VVGL…FLLL).

This sequence belongs to the urea transporter family. Homotrimer; each subunit contains a pore through which urea permeates. Identified in a complex with STOM.

The protein localises to the cell membrane. Its subcellular location is the basolateral cell membrane. The catalysed reaction is urea(in) = urea(out). In terms of biological role, mediates the transport of urea driven by a concentration gradient across the cell membranes of erythrocytes and the renal inner medullary collecting duct which is critical to the urinary concentrating mechanism. Facilitates water transport in erythrocytes. This is Urea transporter 1 (SLC14A1) from Ovis aries (Sheep).